The primary structure comprises 417 residues: WD repeat and FYVE domain-containing protein 2 (417 aa).

WD repeat units follow at residues 29-68, 119-157, 202-241, and 245-284; these read GHVA…QFWP, CHAG…NKVG, AHTN…GEAY, and GHNG…VETP. The FYVE-type zinc-finger motif lies at 286-357; that stretch reads WKTSDCCQKC…ICNDCAGRMK (72 aa). Positions 292, 295, 319, 322, 327, 330, 349, and 352 each coordinate Zn(2+). The stretch at 373 to 412 is one WD 5 repeat; that stretch reads EIRTGITAMHLQETLGLLVTSGQNRVVMIWDVRSVCSAPS.

Functionally, plays a role in coelomocyte endocytosis. This chain is WD repeat and FYVE domain-containing protein 2, found in Caenorhabditis briggsae.